The following is a 361-amino-acid chain: Membrane-bound lytic murein transglycosylase B (361 aa).

The N-terminal stretch at 1–18 is a signal peptide; that stretch reads MFKRRYVTLLPLFVLLAA. Residue Cys19 is the site of N-palmitoyl cysteine attachment. Cys19 is lipidated: S-diacylglycerol cysteine. Glu162 is a catalytic residue.

As to quaternary structure, monomer.

The protein localises to the cell outer membrane. It carries out the reaction Exolytic cleavage of the (1-&gt;4)-beta-glycosidic linkage between N-acetylmuramic acid (MurNAc) and N-acetylglucosamine (GlcNAc) residues in peptidoglycan, from either the reducing or the non-reducing ends of the peptidoglycan chains, with concomitant formation of a 1,6-anhydrobond in the MurNAc residue.. In terms of biological role, murein-degrading enzyme. Catalyzes the cleavage of the glycosidic bonds between N-acetylmuramic acid and N-acetylglucosamine residues in peptidoglycan. May play a role in recycling of muropeptides during cell elongation and/or cell division. The polypeptide is Membrane-bound lytic murein transglycosylase B (mltB) (Escherichia coli (strain K12)).